The primary structure comprises 286 residues: Acetylglutamate kinase (286 aa).

Residues 70–71, Arg92, and Asn184 each bind substrate; that span reads GG.

It belongs to the acetylglutamate kinase family. ArgB subfamily.

It localises to the cytoplasm. The catalysed reaction is N-acetyl-L-glutamate + ATP = N-acetyl-L-glutamyl 5-phosphate + ADP. It functions in the pathway amino-acid biosynthesis; L-arginine biosynthesis; N(2)-acetyl-L-ornithine from L-glutamate: step 2/4. Functionally, catalyzes the ATP-dependent phosphorylation of N-acetyl-L-glutamate. The polypeptide is Acetylglutamate kinase (Ruegeria sp. (strain TM1040) (Silicibacter sp.)).